Reading from the N-terminus, the 301-residue chain is Methionyl-tRNA formyltransferase (301 aa).

109 to 112 (SILP) contacts (6S)-5,6,7,8-tetrahydrofolate.

It belongs to the Fmt family.

It carries out the reaction L-methionyl-tRNA(fMet) + (6R)-10-formyltetrahydrofolate = N-formyl-L-methionyl-tRNA(fMet) + (6S)-5,6,7,8-tetrahydrofolate + H(+). Attaches a formyl group to the free amino group of methionyl-tRNA(fMet). The formyl group appears to play a dual role in the initiator identity of N-formylmethionyl-tRNA by promoting its recognition by IF2 and preventing the misappropriation of this tRNA by the elongation apparatus. The sequence is that of Methionyl-tRNA formyltransferase from Campylobacter curvus (strain 525.92).